The chain runs to 537 residues: Chaperonin GroEL 3 (537 aa).

Residues 30 to 33, 87 to 91, Gly-414, 480 to 482, and Asp-496 contribute to the ATP site; these read TLGP, DGTTT, and DAL.

This sequence belongs to the chaperonin (HSP60) family. In terms of assembly, forms a cylinder of 14 subunits composed of two heptameric rings stacked back-to-back. Interacts with the co-chaperonin GroES.

The protein resides in the cytoplasm. It catalyses the reaction ATP + H2O + a folded polypeptide = ADP + phosphate + an unfolded polypeptide.. Its function is as follows. Together with its co-chaperonin GroES, plays an essential role in assisting protein folding. The GroEL-GroES system forms a nano-cage that allows encapsulation of the non-native substrate proteins and provides a physical environment optimized to promote and accelerate protein folding. This chain is Chaperonin GroEL 3, found in Acaryochloris marina (strain MBIC 11017).